Consider the following 318-residue polypeptide: Methionyl-tRNA formyltransferase (318 aa).

112 to 115 (SILP) contributes to the (6S)-5,6,7,8-tetrahydrofolate binding site.

This sequence belongs to the Fmt family.

It carries out the reaction L-methionyl-tRNA(fMet) + (6R)-10-formyltetrahydrofolate = N-formyl-L-methionyl-tRNA(fMet) + (6S)-5,6,7,8-tetrahydrofolate + H(+). Attaches a formyl group to the free amino group of methionyl-tRNA(fMet). The formyl group appears to play a dual role in the initiator identity of N-formylmethionyl-tRNA by promoting its recognition by IF2 and preventing the misappropriation of this tRNA by the elongation apparatus. This Shewanella baltica (strain OS185) protein is Methionyl-tRNA formyltransferase.